Consider the following 526-residue polypeptide: Protein mono-ADP-ribosyltransferase PARP3 (526 aa).

The tract at residues 1–55 is disordered; that stretch reads MAPKRRAPPASQPADGGKKAKGGQEEEEDAWSSALNALKTAPREKPPATIDGQCP. The WGR domain maps to 61 to 151; sequence DAKVYEDYDC…DNFVAQPGKY (91 aa). Residues 183 to 301 form the PARP alpha-helical domain; the sequence is PCALDETTQK…DIEVAQSLQA (119 aa). Residues 312–526 enclose the PARP catalytic domain; the sequence is HPLDRDYALL…RIRYLVQLHF (215 aa).

This sequence belongs to the ARTD/PARP family.

Its subcellular location is the nucleus. The protein resides in the chromosome. It is found in the cytoplasm. The protein localises to the cytoskeleton. It localises to the microtubule organizing center. Its subcellular location is the centrosome. The protein resides in the centriole. It carries out the reaction L-aspartyl-[protein] + NAD(+) = 4-O-(ADP-D-ribosyl)-L-aspartyl-[protein] + nicotinamide. The enzyme catalyses L-glutamyl-[protein] + NAD(+) = 5-O-(ADP-D-ribosyl)-L-glutamyl-[protein] + nicotinamide. The catalysed reaction is L-lysyl-[protein] + NAD(+) = N(6)-(ADP-D-ribosyl)-L-lysyl-[protein] + nicotinamide + H(+). In terms of biological role, mono-ADP-ribosyltransferase that mediates mono-ADP-ribosylation of target proteins and plays a key role in the response to DNA damage. Mediates mono-ADP-ribosylation of glutamate, aspartate or lysine residues on target proteins. In contrast to PARP1 and PARP2, it is not able to mediate poly-ADP-ribosylation. Involved in DNA repair by mediating mono-ADP-ribosylation of a limited number of acceptor proteins involved in chromatin architecture and in DNA metabolism, such as histone H2B, XRCC5 and XRCC6. ADP-ribosylation follows DNA damage and appears as an obligatory step in a detection/signaling pathway leading to the reparation of DNA strand breaks. Involved in single-strand break repair by catalyzing mono-ADP-ribosylation of histone H2B on 'Glu-2' (H2BE2ADPr) of nucleosomes containing nicked DNA. Cooperates with the XRCC5-XRCC6 (Ku80-Ku70) heterodimer to limit end-resection thereby promoting accurate NHEJ. Associates with a number of DNA repair factors and is involved in the response to exogenous and endogenous DNA strand breaks. Together with APLF, promotes the retention of the LIG4-XRCC4 complex on chromatin and accelerate DNA ligation during non-homologous end-joining (NHEJ). In addition to proteins, also able to ADP-ribosylate DNA: mediates DNA mono-ADP-ribosylation of DNA strand break termini via covalent addition of a single ADP-ribose moiety to a 5'- or 3'-terminal phosphate residues in DNA containing multiple strand breaks. The chain is Protein mono-ADP-ribosyltransferase PARP3 from Gallus gallus (Chicken).